Reading from the N-terminus, the 993-residue chain is Signal peptide, CUB and EGF-like domain-containing protein 3 (993 aa).

A signal peptide spans 1-20; the sequence is MGSGRVPGLCLLVLLVHARA. Residues 29–69 enclose the EGF-like 1; calcium-binding domain; it reads DVDECVEGTDNCHIDAICQNTPRSYKCICKSGYTGDGKHCK. Cystine bridges form between Cys33–Cys46, Cys40–Cys55, Cys57–Cys68, Cys74–Cys86, Cys82–Cys95, Cys97–Cys110, Cys116–Cys127, Cys123–Cys136, Cys161–Cys172, Cys168–Cys182, Cys184–Cys197, Cys201–Cys212, Cys208–Cys221, Cys223–Cys236, Cys240–Cys251, Cys247–Cys260, Cys262–Cys275, Cys281–Cys292, Cys288–Cys301, Cys303–Cys316, Cys322–Cys332, Cys328–Cys341, Cys343–Cys355, Cys361–Cys372, Cys368–Cys381, and Cys383–Cys397. Positions 70-111 constitute an EGF-like 2; calcium-binding domain; the sequence is DVDECEREDNAGCVHDCVNIPGNYRCTCYDGFHLAHDGHNCL. The region spanning 112-148 is the EGF-like 3; calcium-binding domain; sequence DVDECAEGNGGCQQSCVNMMGSYECHCREGFFLSDNQ. EGF-like domains lie at 157-198, 199-237, and 238-276; these read EGMN…RDCK, LTCNYGNGGCQHTCDDTEQGPRCGCHIKFVLHTDGKTCI, and ETCAVNNGGCDSKCHDAATGVHCTCPVGFMLQPDRKTCK. Residues 277–317 form the EGF-like 7; calcium-binding domain; that stretch reads DIDECRLNNGGCDHICRNTVGSFECSCKKGYKLLINERNCQ. One can recognise an EGF-like 8; calcium-binding domain in the interval 318 to 356; the sequence is DIDECSFDRTCDHICVNTPGSFQCLCHRGYLLYGITHCG. The EGF-like 9; calcium-binding domain maps to 357–398; it reads DVDECSINRGGCRFGCINTPGSYQCTCPAGQGRLHWNGKDCT. N-linked (GlcNAc...) asparagine glycosylation is found at Asn417, Asn464, Asn685, Asn756, and Asn785. Cystine bridges form between Cys804/Cys830 and Cys857/Cys878. The CUB domain occupies 804 to 916; that stretch reads CGGELGEFTG…RGFQIPYVTY (113 aa).

In terms of assembly, forms homooligomers. Forms heterooligomers with SCUBE1 and SCUBE2. Interacts with TGFBR2 through the CUB domain; this interaction does not affect TGFB1-binding to TGFBR2. Interacts with BMP2, BMP4 and BMP7; the interaction is mediated by the CUB domain. Interacts with BMPR1A, BMPR1B and BMPR2; the interaction with BMPR1A and BMPR1B is BMP2- and BMP4-dependent. In terms of processing, N-glycosylated. Proteolytic cleavage produces a CUB-containing C-terminal fragment that retains the ability to bind to TGFBR2. This reaction is catalyzed in vitro by MMP2 and, to a lesser extent, by MMP9. As to expression, highly expressed in osteoblasts. In normal lung, mainly expressed in bronchial epithelial cells. Tends to be up-regulated in lung cancer cells.

The protein resides in the secreted. It is found in the cell surface. Is a positive regulator of the BMP signaling pathway, required for proper chondrogenesis, osteogenesis and skeletal development. It acts as a coreceptor for BMP ligands, particularly BMP2 and BMP4, facilitating their interactions with BMP type I receptors. It is required for ligand-induced recruitment of BMP receptors to lipid rafts. Binds to TGFBR2 and activates TGFB signaling. In lung cancer cells, could serve as an endogenous autocrine and paracrine ligand of TGFBR2, which could regulate TGFBR2 signaling and hence modulate epithelial-mesenchymal transition and cancer progression. This is Signal peptide, CUB and EGF-like domain-containing protein 3 from Homo sapiens (Human).